A 571-amino-acid polypeptide reads, in one-letter code: MSERYSGPLVVEGKLADAERMKQESNYLRGTITDDLNDGLTGGFNGDNFLLIRFHGMYQQDDRDIRAERAEQKLEPRHAMMLRCRLPGGVMTPQQWLAIDKFAGEKTLYGSIRITNRQTFQFHGILKGDLKSAHQLLHEVGLDALATANDVNRNVLCTSNPVESELHQQAYEWAKKISEHLLPRTRAYAEVWLDKEKVATTDEEPILGPTYLPRKFKTTVVIPPQNDVDLHANDLNFVAISDNGQLVGFNVLVGGGLSIAHGDKTTYPRTASELGYIPLAQTLAVAEAVVTTQRDWGNRTNRKNAKTKYTLERVGVDTFKQEVERRAGMTFETVRPYAFTGRGDRIGWVKGIDNKWHLTLFIENGRLLDYPGRPLKTGMAEIAKIHKGDFRLTANQNLIVAGVATRDKAKIEALARQYGLIDDSVTEQRQNSMACVSLPTCPLAMAEAERFLPEFVTQVEGIMHKHGVGDDHIVLRVTGCPNGCGRAMLAEIGLVGKAIGRYNLHIGGNREGTRIPRMYRENITEKEILTEIDQLVARWAGERHSGEGFGDFAIRVGIVKPVLDPAIDFYD.

Residues C435, C441, C480, and C484 each coordinate [4Fe-4S] cluster. C484 lines the siroheme pocket.

The protein belongs to the nitrite and sulfite reductase 4Fe-4S domain family. In terms of assembly, alpha(8)-beta(8). The alpha component is a flavoprotein, the beta component is a hemoprotein. Siroheme is required as a cofactor. [4Fe-4S] cluster serves as cofactor.

The catalysed reaction is hydrogen sulfide + 3 NADP(+) + 3 H2O = sulfite + 3 NADPH + 4 H(+). It functions in the pathway sulfur metabolism; hydrogen sulfide biosynthesis; hydrogen sulfide from sulfite (NADPH route): step 1/1. Its function is as follows. Component of the sulfite reductase complex that catalyzes the 6-electron reduction of sulfite to sulfide. This is one of several activities required for the biosynthesis of L-cysteine from sulfate. In Dickeya chrysanthemi (strain Ech1591) (Dickeya zeae (strain Ech1591)), this protein is Sulfite reductase [NADPH] hemoprotein beta-component.